Reading from the N-terminus, the 119-residue chain is Large ribosomal subunit protein uL22 (119 aa).

The protein belongs to the universal ribosomal protein uL22 family. In terms of assembly, part of the 50S ribosomal subunit.

In terms of biological role, this protein binds specifically to 23S rRNA; its binding is stimulated by other ribosomal proteins, e.g. L4, L17, and L20. It is important during the early stages of 50S assembly. It makes multiple contacts with different domains of the 23S rRNA in the assembled 50S subunit and ribosome. The globular domain of the protein is located near the polypeptide exit tunnel on the outside of the subunit, while an extended beta-hairpin is found that lines the wall of the exit tunnel in the center of the 70S ribosome. This Microcystis aeruginosa (strain NIES-843 / IAM M-2473) protein is Large ribosomal subunit protein uL22.